The following is a 267-amino-acid chain: Diacetylchitobiose deacetylase (267 aa).

Belongs to the PIGL family. In terms of assembly, homohexamer.

It is found in the cytoplasm. The catalysed reaction is N,N'-diacetylchitobiose + H2O = beta-D-glucosaminyl-(1-&gt;4)-N-acetyl-D-glucosamine + acetate. The protein operates within glycan degradation; chitin degradation. Its function is as follows. Deacylates the non-reducing end of diacetylchitobiose (GlcNAc2). Can also use N-acetylglucosamine (GlcNAc) and N-acetylchitotriose (GlcNAc3). Probably involved in chitin degradation. The chain is Diacetylchitobiose deacetylase (dac) from Thermococcus kodakarensis (strain ATCC BAA-918 / JCM 12380 / KOD1) (Pyrococcus kodakaraensis (strain KOD1)).